Reading from the N-terminus, the 244-residue chain is Protein crossbronx (244 aa).

One can recognise a UBC core domain in the interval 20–176 (QQEYKILAEY…VQENIKESKE (157 aa)). A disordered region spans residues 209-244 (AGRSKQTEPSAQQGNGGHATGLSWVKEGEFKPLSIE).

This sequence belongs to the ubiquitin-conjugating enzyme family. FTS subfamily.

The protein is Protein crossbronx (cbx) of Drosophila simulans (Fruit fly).